The sequence spans 434 residues: Septin-6 (434 aa).

Ala-2 is modified (N-acetylalanine). Position 27 is a phosphoserine (Ser-27). One can recognise a Septin-type G domain in the interval 39–305 (QGFCFNILCV…ELYRRCKLEE (267 aa)). Residues 49 to 56 (GETGLGKS) are G1 motif. GTP is bound by residues 49 to 56 (GETGLGKS), Gly-104, 185 to 193 (KSDAISKSE), Gly-239, and Arg-254. The segment at 101 to 104 (STVG) is G3 motif. The G4 motif stretch occupies residues 184 to 187 (AKSD). A coiled-coil region spans residues 321-407 (QETYEAKRNE…QRKAAAELLQ (87 aa)). Lys-367 carries the N6-acetyllysine modification. The interval 403–434 (AELLQSQGSQAGGSQTLKRDKEKKNNPWLCIE) is disordered. The segment covering 407-417 (QSQGSQAGGSQ) has biased composition (low complexity). Ser-416 is subject to Phosphoserine. Thr-418 is subject to Phosphothreonine.

It belongs to the TRAFAC class TrmE-Era-EngA-EngB-Septin-like GTPase superfamily. Septin GTPase family. Septins polymerize into heterooligomeric protein complexes that form filaments, and associate with cellular membranes, actin filaments and microtubules. GTPase activity is required for filament formation. Filaments are assembled from asymmetrical heterotrimers, composed of SEPTIN2, SEPTIN6 and SEPTIN7 that associate head-to-head to form a hexameric unit. Within the trimer, directly interacts with SEPTIN2 and SEPTIN7. Also interacts with SEPTIN9 and SEPTIN12. Interaction with SEPTIN12 alters filament structure. Component of a septin core octameric complex consisting of SEPTIN12, SEPTIN7, SEPTIN6 and SEPTIN2 or SEPTIN4 in the order 12-7-6-2-2-6-7-12 or 12-7-6-4-4-6-7-12 and located in the sperm annulus. Interacts with SOCS7. Interacts with HNRNPA1. In terms of tissue distribution, expressed in the cerebral cortex (at protein level). Associated with synaptic vesicles in various brain regions, including glomeruli of the olfactory bulb (at protein level).

It localises to the cytoplasm. The protein localises to the cytoskeleton. The protein resides in the spindle. It is found in the chromosome. Its subcellular location is the centromere. It localises to the kinetochore. The protein localises to the cleavage furrow. The protein resides in the midbody. It is found in the cell projection. Its subcellular location is the cilium. It localises to the flagellum. Its function is as follows. Filament-forming cytoskeletal GTPase. Required for normal organization of the actin cytoskeleton. Involved in cytokinesis. Forms a filamentous structure with SEPTIN12, SEPTIN6, SEPTIN2 and probably SEPTIN4 at the sperm annulus which is required for the structural integrity and motility of the sperm tail during postmeiotic differentiation. This chain is Septin-6, found in Mus musculus (Mouse).